The sequence spans 1021 residues: Collagen alpha-1(I) chain (1021 aa).

Positions 1–1021 (DEKSAGGISV…PGPPGPPGPP (1021 aa)) are disordered. Allysine is present on lysine 3. Residue serine 4 is modified to Phosphoserine. 4-hydroxyproline is present on residues proline 23, proline 26, proline 29, proline 38, proline 41, proline 44, proline 59, proline 74, proline 80, proline 89, and proline 95. Positions 31-50 (PQGFQGPPGEPGEPGASGPM) are enriched in low complexity. Basic and acidic residues predominate over residues 62 to 76 (NGDDGEAGKPGRPGE). Lysine 98 bears the 5-hydroxylysine; alternate mark. Lysine 98 is a glycosylation site (O-linked (Gal...) hydroxylysine; alternate). Residue serine 104 is modified to Phosphoserine. Low complexity predominate over residues 112–128 (DAGPAGPKGEPGSPGEN). Residues proline 122, proline 125, proline 131, proline 140, proline 146, proline 167, proline 176, proline 179, proline 206, proline 209, proline 221, proline 227, proline 236, proline 242, proline 245, and proline 260 each carry the 4-hydroxyproline modification. A compositionally biased stretch (low complexity) spans 146–164 (PGASGPAGARGNDGATGAA). Residues 166 to 178 (PPGPTGPAGPPGF) are compositionally biased toward pro residues. Residues 212–262 (AGAAGPAGNPGADGQPGAKGANGAPGIAGAPGFPGARGPSGPQGPSGAPGP) are compositionally biased toward low complexity. The residue at position 263 (lysine 263) is a 5-hydroxylysine. Proline 269, proline 272, proline 284, proline 293, proline 308, proline 314, proline 323, and proline 329 each carry 4-hydroxyproline. Positions 318-327 (GERGGPGSRG) are enriched in gly residues. Lysine 338 carries the post-translational modification 5-hydroxylysine. Residues proline 347, proline 356, proline 362, proline 368, proline 377, proline 380, proline 389, proline 398, proline 404, proline 416, proline 425, proline 434, proline 437, proline 455, proline 472, proline 478, proline 484, proline 490, proline 496, proline 502, proline 514, proline 523, proline 534, proline 546, proline 549, proline 555, proline 561, and proline 570 each carry the 4-hydroxyproline modification. Low complexity predominate over residues 371-425 (KGLTGSPGSPGPDGKTGPPGPAGQDGRPGPAGPPGARGQAGVMGFPGPKGAAGEP). Low complexity predominate over residues 484-493 (PGEAGKPGEQ). The span at 536 to 558 (NDGAKGDAGAPGAPGSQGAPGLQ) shows a compositional bias: low complexity. 5-hydroxylysine is present on lysine 582. Proline 588 and proline 603 each carry 4-hydroxyproline. Low complexity predominate over residues 615–629 (AGPSGPAGPTGARGA). Phosphoserine is present on serine 618. 7 positions are modified to 4-hydroxyproline: proline 630, proline 636, proline 639, proline 648, proline 654, proline 681, and proline 690. The segment covering 642-672 (AGFAGPPGADGQPGAKGEPGDAGAKGDAGPS) has biased composition (low complexity). Lysine 693 is modified (5-hydroxylysine). Residues 698-714 (SAGPPGATGFPGAAGRV) are compositionally biased toward low complexity. 4-hydroxyproline is present on residues proline 702 and proline 708. Proline 716 carries the post-translational modification 3-hydroxyproline. Proline 717, proline 726, proline 729, proline 750, proline 759, proline 768, proline 777, proline 794, proline 803, proline 806, proline 812, proline 827, proline 833, proline 839, proline 848, and proline 854 each carry 4-hydroxyproline. The segment covering 743-752 (ETGPAGRPGE) has biased composition (low complexity). Residues 762–777 (SGEKGSPGADGPAGAP) are compositionally biased toward low complexity. Over residues 826-836 (PPGPMGPPGLA) the composition is skewed to pro residues. A compositionally biased stretch (low complexity) spans 838-853 (PPGEAGREGSPGAEGS). A 5-hydroxylysine modification is found at lysine 863. Over residues 871–886 (PGPPGAPGAPGAPGPV) the composition is skewed to pro residues. 4-hydroxyproline is present on residues proline 874, proline 877, and proline 880. Over residues 907 to 921 (AGPAGARGPAGPQGP) the composition is skewed to low complexity. Over residues 922-936 (RGDKGETGEQGDRGI) the composition is skewed to basic and acidic residues. Position 925 is a 5-hydroxylysine (lysine 925). Lysine 937 is subject to 5-hydroxylysine; alternate. The O-linked (Gal...) hydroxylysine; alternate glycan is linked to lysine 937. 4-hydroxyproline is present on residues proline 952, proline 955, proline 973, and proline 988. Low complexity predominate over residues 955–988 (PGEQGPSGASGPAGPRGPPGSAGTPGKDGLNGLP). Proline 993 carries the post-translational modification 3-hydroxyproline. The residue at position 994 (proline 994) is a 4-hydroxyproline. Pro residues predominate over residues 1006 to 1021 (VGPPGPPGPPGPPGPP). Proline 1008 is modified (3-hydroxyproline). Proline 1009 carries the post-translational modification 4-hydroxyproline. Proline 1011 carries the 3-hydroxyproline modification. Residue proline 1012 is modified to 4-hydroxyproline. Proline 1014 carries the post-translational modification 3-hydroxyproline. 4-hydroxyproline occurs at positions 1015, 1018, and 1021.

It belongs to the fibrillar collagen family. As to quaternary structure, trimers of one alpha 2(I) and two alpha 1(I) chains. Post-translationally, contains mostly 4-hydroxyproline. Proline residues at the third position of the tripeptide repeating unit (G-X-Y) are hydroxylated in some or all of the chains. Contains 3-hydroxyproline at a few sites. This modification occurs on the first proline residue in the sequence motif Gly-Pro-Hyp, where Hyp is 4-hydroxyproline. In terms of processing, lysine residues at the third position of the tripeptide repeating unit (G-X-Y) are 5-hydroxylated in some or all of the chains. Post-translationally, O-glycosylated on hydroxylated lysine residues. The O-linked glycan consists of a Glc-Gal disaccharide. Expressed in bones.

It is found in the secreted. It localises to the extracellular space. The protein resides in the extracellular matrix. In terms of biological role, type I collagen is a member of group I collagen (fibrillar forming collagen). The protein is Collagen alpha-1(I) chain of Doedicurus sp. (South American giant glyptodont).